A 318-amino-acid chain; its full sequence is Myoblast determination protein 1 (318 aa).

A Peptide (Met-Gly) (interchain with G-Cter in ubiquitin) cross-link involves residue M1. At K104 the chain carries N6-methyllysine; by EHMT2. The bHLH domain occupies D109–L160. Disordered regions lie at residues A175–G224 and S262–L318. Over residues S196 to S206 the composition is skewed to polar residues. Low complexity predominate over residues S262–P271. Residues D272 to P282 are compositionally biased toward pro residues. Positions A290 to Q304 are enriched in polar residues.

Efficient DNA binding requires dimerization with another bHLH protein. Seems to form active heterodimers with ITF-2. Interacts with SUV39H1. Interacts with DDX5. Interacts with CHD2. Interacts with TSC22D3. Interacts with SETD3. Interacts with P-TEFB complex; promotes the transcriptional activity of MYOD1 through its CDK9-mediated phosphorylation. Interacts with CSRP3. Interacts with NUPR1. In terms of processing, phosphorylated by CDK9. This phosphorylation promotes its function in muscle differentiation. Post-translationally, acetylated by a complex containing EP300 and PCAF. The acetylation is essential to activate target genes. Conversely, its deacetylation by SIRT1 inhibits its function. Ubiquitinated on the N-terminus; which is required for proteasomal degradation. In terms of processing, methylation at Lys-104 by EHMT2/G9a inhibits myogenic activity.

The protein resides in the nucleus. In terms of biological role, acts as a transcriptional activator that promotes transcription of muscle-specific target genes and plays a role in muscle differentiation. Together with MYF5 and MYOG, co-occupies muscle-specific gene promoter core region during myogenesis. Induces fibroblasts to differentiate into myoblasts. Interacts with and is inhibited by the twist protein. This interaction probably involves the basic domains of both proteins. The sequence is that of Myoblast determination protein 1 (Myod1) from Rattus norvegicus (Rat).